A 423-amino-acid chain; its full sequence is Gamma-glutamyl phosphate reductase (423 aa).

It belongs to the gamma-glutamyl phosphate reductase family.

The protein resides in the cytoplasm. The catalysed reaction is L-glutamate 5-semialdehyde + phosphate + NADP(+) = L-glutamyl 5-phosphate + NADPH + H(+). It participates in amino-acid biosynthesis; L-proline biosynthesis; L-glutamate 5-semialdehyde from L-glutamate: step 2/2. Catalyzes the NADPH-dependent reduction of L-glutamate 5-phosphate into L-glutamate 5-semialdehyde and phosphate. The product spontaneously undergoes cyclization to form 1-pyrroline-5-carboxylate. This is Gamma-glutamyl phosphate reductase from Paracoccus denitrificans (strain Pd 1222).